Here is a 783-residue protein sequence, read N- to C-terminus: Cyclic di-GMP phosphodiesterase NbdA (783 aa).

Residues 81–274 (YSPSLVALAF…FTGMAALVLS (194 aa)) form the MHYT domain. Helical transmembrane passes span 84–104 (SLVA…LDMV), 120–140 (IGAF…MLAF), 150–170 (LPIT…TMYM), 176–196 (FGLL…AAMH), 215–235 (LFAL…AAVP), 255–275 (LLAG…VLSV), and 292–312 (LGWL…WAAW). Topologically, residues 313–783 (SEKQRERRLS…APPLRSLNQA (471 aa)) are cytoplasmic. Residues 375–507 (KGLAVMFLDL…GRNNAQFFSR (133 aa)) enclose the GGDEF domain. In terms of domain architecture, EAL spans 516–770 (ELQMEEELRQ…ALEEFLRAYR (255 aa)). Q537, E551, R555, N610, and N615 together coordinate 3',3'-c-di-GMP. Mg(2+) is bound at residue E551. Residue N610 participates in Mg(2+) binding. Mg(2+) contacts are provided by E642, D672, and D673. D672 is a 3',3'-c-di-GMP binding site. Position 696 (R696) interacts with 3',3'-c-di-GMP. A Mg(2+)-binding site is contributed by E729. The 3',3'-c-di-GMP site is built by E732 and Y751.

It depends on Mg(2+) as a cofactor.

It localises to the cell inner membrane. It carries out the reaction 3',3'-c-di-GMP + H2O = 5'-phosphoguanylyl(3'-&gt;5')guanosine + H(+). Its activity is regulated as follows. PDE activity is stimulated by GTP. It could also be stimulated by NO. Its function is as follows. Displays c-di-GMP-specific phosphodiesterase (PDE) activity. Seems to play a specific role in nitric oxide (NO)-induced biofilm dispersion. Enhanced NbdA synthesis in the presence of NO increases PDE activity, leading to reduced cellular c-di-GMP levels and biofilm dispersion. Does not show diguanylate cyclase (DGC) activity. This is Cyclic di-GMP phosphodiesterase NbdA from Pseudomonas aeruginosa (strain ATCC 15692 / DSM 22644 / CIP 104116 / JCM 14847 / LMG 12228 / 1C / PRS 101 / PAO1).